The chain runs to 156 residues: Small ribosomal subunit protein uS7 (156 aa).

Belongs to the universal ribosomal protein uS7 family. Part of the 30S ribosomal subunit. Contacts proteins S9 and S11.

One of the primary rRNA binding proteins, it binds directly to 16S rRNA where it nucleates assembly of the head domain of the 30S subunit. Is located at the subunit interface close to the decoding center, probably blocks exit of the E-site tRNA. The protein is Small ribosomal subunit protein uS7 of Parafrankia sp. (strain EAN1pec).